The primary structure comprises 177 residues: Meiotic chromosome segregation protein C17A2.07c (177 aa).

Residues 71-90 form a disordered region; it reads EDDSINKPTEEADEAPRTQL. Positions 74-86 are enriched in basic and acidic residues; that stretch reads SINKPTEEADEAP.

It is found in the nucleus. In terms of biological role, involved in meiotic chromosome segregation. This Schizosaccharomyces pombe (strain 972 / ATCC 24843) (Fission yeast) protein is Meiotic chromosome segregation protein C17A2.07c.